Here is a 605-residue protein sequence, read N- to C-terminus: Glycerophosphodiester phosphodiesterase domain-containing protein 5 (605 aa).

Residues 1 to 42 (MVRHQPLQYYEPQLCLSCLTGIYGCRWKRYQRSHDDTTPWER) lie on the Cytoplasmic side of the membrane. Intrachain disulfides connect C15–C18 and C25–C571. The chain crosses the membrane as a helical span at residues 43-63 (LWFLLLTFTFGLTLTWLYFWW). Residues 64–89 (EVHNDYDEFNWYLYNRMGYWSDWPVP) are Extracellular-facing. The helical transmembrane segment at 90 to 110 (ILVTTAAAFAYIAGLLVLALC) threads the bilayer. The Cytoplasmic portion of the chain corresponds to 111-125 (HIAVGQQMNLHWLHK). Residues 126–146 (IGLVVILASTVVAMSAVAQLW) traverse the membrane as a helical segment. Over 147–160 (EDEWEVLLISLQGT) the chain is Extracellular. A helical transmembrane segment spans residues 161–181 (APFLHVGAVAAVTMLSWIVAG). The Cytoplasmic portion of the chain corresponds to 182–192 (QFARAERTSSQ). A helical membrane pass occupies residues 193-213 (VTILCTFFTVVFALYLAPLTI). Residues 214–496 (SSPCIMEKKD…PLWIMPPDEY (283 aa)) are Extracellular-facing. In terms of domain architecture, GP-PDE spans 228–485 (PALIGHRGAP…DNSHALSQVP (258 aa)). Residues N301, N336, N352, N374, and N448 are each glycosylated (N-linked (GlcNAc...) asparagine). The helical transmembrane segment at 497–517 (CLMWVTADLVSFTLIVGIFVL) threads the bilayer. At 518–605 (QKWRLGGIRS…TKTLIERSGR (88 aa)) the chain is on the cytoplasmic side. Residues 582–605 (STATPVGPRGGGSHTKTLIERSGR) are disordered.

This sequence belongs to the glycerophosphoryl diester phosphodiesterase family. As to quaternary structure, interacts with PRDX1; forms a mixed-disulfide with PRDX1, leading to disrupt intramolecular disulfide bond between Cys-25 and Cys-571. Intramolecular disulfide bond between Cys-25 and Cys-571 is reduced by PRDX1.

The protein localises to the endomembrane system. It is found in the cytoplasm. It localises to the perinuclear region. Its subcellular location is the cell projection. The protein resides in the growth cone. The catalysed reaction is a 1,2-diacyl-sn-glycero-3-phospho-(1D-myo-inositol-4,5-bisphosphate) + H2O = 1D-myo-inositol 1,4,5-trisphosphate + a 1,2-diacyl-sn-glycerol + H(+). It catalyses the reaction sn-glycerol 3-phosphocholine + H2O = sn-glycerol 3-phosphate + choline + H(+). Its function is as follows. Glycerophosphodiester phosphodiesterase that promotes neurite formation and drives spinal motor neuron differentiation. Mediates the cleavage of glycosylphosphatidylinositol (GPI) anchor of target proteins: removes the GPI-anchor of RECK, leading to release RECK from the plasma membrane. May contribute to the osmotic regulation of cellular glycerophosphocholine. The chain is Glycerophosphodiester phosphodiesterase domain-containing protein 5 from Homo sapiens (Human).